The chain runs to 349 residues: UPF0324 inner membrane protein YeiH (349 aa).

Residues 1–12 are Periplasmic-facing; it reads MTELTLQNHCRT. The chain crosses the membrane as a helical span at residues 13 to 35; that stretch reads MWHFIPGLALSAVITGVALWGGA. Residues 36–38 are Cytoplasmic-facing; sequence IPA. Residues 39 to 61 form a helical membrane-spanning segment; that stretch reads VAGAGFSALTLAILLGMVIGNTI. Residues 62–99 are Periplasmic-facing; it reads YPQIWKQCDGGVLFAKQHLLRLGIILYGFRLTFSQIAD. A helical membrane pass occupies residues 100-122; sequence VGISGIVIDVLTLSSTFMLACFL. At 123–131 the chain is on the cytoplasmic side; that stretch reads GQKVFGLDR. Residues 132–151 form a helical membrane-spanning segment; that stretch reads HTSWLIGAGSSICGAAAVLA. The Periplasmic portion of the chain corresponds to 152–162; the sequence is TEPVVKAEASK. Residues 163 to 185 form a helical membrane-spanning segment; it reads VTVAVATVVIFGTIAIFLYPAMY. The Cytoplasmic portion of the chain corresponds to 186–261; that stretch reads PLLAHWFSPE…SPATGAEKSK (76 aa). Residues 262–284 traverse the membrane as a helical segment; it reads ITIPWFAIFFIVVAIFNSFHLLP. Residues 285–290 are Periplasmic-facing; that stretch reads KAVVDM. The helical transmembrane segment at 291 to 313 threads the bilayer; sequence LVTLDTVLLAMAMAALGLTTHVS. At 314–322 the chain is on the cytoplasmic side; that stretch reads ALKKAGAKP. The chain crosses the membrane as a helical span at residues 323 to 345; that stretch reads LLMALALFAWLIIGGGAINVLIH. Topologically, residues 346–349 are periplasmic; the sequence is SLIA.

It belongs to the UPF0324 family.

The protein localises to the cell inner membrane. The polypeptide is UPF0324 inner membrane protein YeiH (yeiH) (Salmonella typhimurium (strain LT2 / SGSC1412 / ATCC 700720)).